Here is a 262-residue protein sequence, read N- to C-terminus: Thiazole synthase (262 aa).

Lys-104 serves as the catalytic Schiff-base intermediate with DXP. Residues Gly-165, 191–192, and 213–214 each bind 1-deoxy-D-xylulose 5-phosphate; these read AG and NT.

The protein belongs to the ThiG family. Homotetramer. Forms heterodimers with either ThiH or ThiS.

It is found in the cytoplasm. The catalysed reaction is [ThiS sulfur-carrier protein]-C-terminal-Gly-aminoethanethioate + 2-iminoacetate + 1-deoxy-D-xylulose 5-phosphate = [ThiS sulfur-carrier protein]-C-terminal Gly-Gly + 2-[(2R,5Z)-2-carboxy-4-methylthiazol-5(2H)-ylidene]ethyl phosphate + 2 H2O + H(+). Its pathway is cofactor biosynthesis; thiamine diphosphate biosynthesis. In terms of biological role, catalyzes the rearrangement of 1-deoxy-D-xylulose 5-phosphate (DXP) to produce the thiazole phosphate moiety of thiamine. Sulfur is provided by the thiocarboxylate moiety of the carrier protein ThiS. In vitro, sulfur can be provided by H(2)S. This Nitrosococcus oceani (strain ATCC 19707 / BCRC 17464 / JCM 30415 / NCIMB 11848 / C-107) protein is Thiazole synthase.